The chain runs to 450 residues: UDP-N-acetylmuramoylalanine--D-glutamate ligase (450 aa).

118-124 provides a ligand contact to ATP; it reads GSNAKST.

It belongs to the MurCDEF family.

It is found in the cytoplasm. It carries out the reaction UDP-N-acetyl-alpha-D-muramoyl-L-alanine + D-glutamate + ATP = UDP-N-acetyl-alpha-D-muramoyl-L-alanyl-D-glutamate + ADP + phosphate + H(+). It participates in cell wall biogenesis; peptidoglycan biosynthesis. Cell wall formation. Catalyzes the addition of glutamate to the nucleotide precursor UDP-N-acetylmuramoyl-L-alanine (UMA). The sequence is that of UDP-N-acetylmuramoylalanine--D-glutamate ligase from Pseudomonas putida (strain ATCC 47054 / DSM 6125 / CFBP 8728 / NCIMB 11950 / KT2440).